A 138-amino-acid chain; its full sequence is Acidic phospholipase A2 homolog sistruxin A (138 aa).

Residues 1-37 (MRALWIVAVLLLGVEGSLVEFETLIMKIAGRSGVWYY) form the signal peptide. Cystine bridges form between cysteine 42-cysteine 131, cysteine 44-cysteine 60, cysteine 59-cysteine 111, cysteine 65-cysteine 138, cysteine 66-cysteine 104, cysteine 73-cysteine 97, and cysteine 91-cysteine 102. Positions 78 to 83 (DVYTYR) are excised as a propeptide. Pyrrolidone carboxylic acid is present on glutamine 84. Residues 119–124 (YNHKYW) constitute a propeptide that is removed on maturation.

The protein belongs to the phospholipase A2 family. Group II subfamily. D49 sub-subfamily. Heterodimer of an acidic subunit and a basic chain. The acidic subunit is non-toxic, without enzymatic activity and comprises 3 peptides that are cross-linked by 7 disulfide bridges. The basic subunit is toxic, has phospholipase A2 activity and is composed of a single chain. Expressed by the venom gland.

The protein localises to the secreted. In terms of biological role, snake venom phospholipase A2 (PLA2) that inhibits neuromuscular transmission by blocking acetylcholine release from the nerve termini. The polypeptide is Acidic phospholipase A2 homolog sistruxin A (Sistrurus tergeminus (Western massasauga)).